The sequence spans 410 residues: 2-oxoisovalerate dehydrogenase subunit alpha (410 aa).

The protein belongs to the BCKDHA family. In terms of assembly, heterodimer of an alpha and a beta chain. Thiamine diphosphate is required as a cofactor.

The enzyme catalyses N(6)-[(R)-lipoyl]-L-lysyl-[protein] + 3-methyl-2-oxobutanoate + H(+) = N(6)-[(R)-S(8)-2-methylpropanoyldihydrolipoyl]-L-lysyl-[protein] + CO2. The branched-chain alpha-keto dehydrogenase complex catalyzes the overall conversion of alpha-keto acids to acyl-CoA and CO(2). It contains multiple copies of three enzymatic components: branched-chain alpha-keto acid decarboxylase (E1), lipoamide acyltransferase (E2) and lipoamide dehydrogenase (E3). The protein is 2-oxoisovalerate dehydrogenase subunit alpha (bkdA1) of Pseudomonas aeruginosa (strain ATCC 15692 / DSM 22644 / CIP 104116 / JCM 14847 / LMG 12228 / 1C / PRS 101 / PAO1).